Consider the following 396-residue polypeptide: Protein NDRG1-B (396 aa).

The interval 326-396 (RSRTGSAASS…NTPKSMEVSC (71 aa)) is disordered. The segment covering 327 to 340 (SRTGSAASSSSQDG) has biased composition (low complexity). Tandem repeats lie at residues 340 to 349 (GNRSRSHTNE), 350 to 359 (GSRSRSQTGD), 360 to 369 (GNRSRAHTGD), and 370 to 379 (GNRSRSHTDT). The interval 340–379 (GNRSRSHTNEGSRSRSQTGDGNRSRAHTGDGNRSRSHTDT) is 4 X 10 AA tandem repeats of G-[NS]-R-S-R-[AS]-[HQ]-T-[DGN]-[DET]. Basic and acidic residues predominate over residues 366–377 (HTGDGNRSRSHT). Polar residues predominate over residues 378 to 390 (DTNNVNSDHNTPK).

Belongs to the NDRG family.

May be involved in pronephros development, after specification of the pronephros. The sequence is that of Protein NDRG1-B (ndrg1-b) from Xenopus laevis (African clawed frog).